Reading from the N-terminus, the 298-residue chain is Transcription factor SRM1 (298 aa).

Positions 7-62 constitute an SANT domain; sequence SDGSVWSREDDIAFERALANNTDESEERWEKIAADVPGKSVEQIKEHYELLVEDVT. The interval 68–118 is disordered; the sequence is CVPLPAYGSPEGSNGHAGDEGASSKKGGNSHAGESNQAGKSKSDQERRKGI. A compositionally biased stretch (basic and acidic residues) spans 108–118; the sequence is SKSDQERRKGI. Residues 111–168 form the HTH myb-type domain; sequence DQERRKGIAWTEDEHRLFLLGLDKYGKGDWRSISRNFVVTRTPTQVASHAQKYFIRLN. The segment at residues 140–164 is a DNA-binding region (H-T-H motif); the sequence is WRSISRNFVVTRTPTQVASHAQKYF. The span at 182 to 200 shows a compositional bias: polar residues; the sequence is ITSVGNADVSTPQGPITGQ. The segment at 182–245 is disordered; that stretch reads ITSVGNADVS…GPPMYGTPAI (64 aa). The span at 201 to 215 shows a compositional bias: low complexity; the sequence is NNSNNNNNNNNNNSS.

As to expression, expressed in young seedlings, developing leaves, sepals and trichomes.

Its subcellular location is the nucleus. Functionally, transcription activator that coordinates abscisic acid (ABA) biosynthesis and signaling-related genes via binding to the specific promoter motif 5'-(A/T)AACCAT-3'. Represses ABA-mediated salt (e.g. NaCl and KCl) stress tolerance. Regulates leaf shape and promotes vegetative growth. This Arabidopsis thaliana (Mouse-ear cress) protein is Transcription factor SRM1.